Here is a 681-residue protein sequence, read N- to C-terminus: PTS system glucose-specific EIICBA component (681 aa).

A PTS EIIC type-1 domain is found at 3–414; that stretch reads KKLFGQLQRI…LKYKTPGRED (412 aa). Helical transmembrane passes span 16 to 36, 73 to 93, 126 to 146, 170 to 190, 199 to 219, 273 to 293, 303 to 323, 328 to 348, 355 to 375, and 383 to 403; these read LMLP…GTAI, MIFA…AAIA, ILGI…GALA, FVPI…ALIW, AFST…FGFI, FMQG…LAIY, VVAG…ITEP, FLFV…LSFL, VHLG…GVLP, and VIPV…FLIV. The region spanning 425–506 is the PTS EIIB type-1 domain; the sequence is TELPYAVLEA…QQIMNGQVVE (82 aa). The active-site Phosphocysteine intermediate; for EIIB activity is Cys-447. Positions 551 to 655 constitute a PTS EIIA type-1 domain; sequence DQVFSEKMMG…SDITPIIVTQ (105 aa). His-603 acts as the Tele-phosphohistidine intermediate; for EIIA activity in catalysis.

Its subcellular location is the cell membrane. The enzyme catalyses N(pros)-phospho-L-histidyl-[protein] + D-glucose(out) = D-glucose 6-phosphate(in) + L-histidyl-[protein]. Functionally, the phosphoenolpyruvate-dependent sugar phosphotransferase system (sugar PTS), a major carbohydrate active transport system, catalyzes the phosphorylation of incoming sugar substrates concomitantly with their translocation across the cell membrane. This system is involved in glucose transport. The chain is PTS system glucose-specific EIICBA component (ptsG) from Staphylococcus aureus (strain JH9).